A 148-amino-acid chain; its full sequence is Meiosis inducing protein mei3 (148 aa).

Over residues 1–20 (MSSQNTSNSRHPASSASALP) the composition is skewed to polar residues. The tract at residues 1–96 (MSSQNTSNSR…AQRIEHENKE (96 aa)) is disordered. Residues 21 to 46 (NRTNTARRSTSPRTSTGSSSTNTNTK) are compositionally biased toward low complexity. Residues 75–86 (PMKRTKRVRRTP) show a composition bias toward basic residues.

Acts as a critical meiotic inducer by binding non-covalently to protein kinase ran1/pat1 inhibiting its enzymatic activity. Inhibits ran1/pat1 by acting as a pseudosubstrate for ran1/pat1 instead of its natural substrate ste11. Inactivation of the ran1/pat1 protein kinase is both necessary and sufficient to divert a vegetative cell from mitotic division to meiotic differentiation. The polypeptide is Meiosis inducing protein mei3 (Schizosaccharomyces pombe (strain 972 / ATCC 24843) (Fission yeast)).